We begin with the raw amino-acid sequence, 230 residues long: Ribose-5-phosphate isomerase A (230 aa).

Substrate-binding positions include 29 to 32, 85 to 88, and 98 to 101; these read TGST, DGAD, and KGGG. Catalysis depends on Glu107, which acts as the Proton acceptor. Lys125 lines the substrate pocket.

It belongs to the ribose 5-phosphate isomerase family. Homodimer.

The enzyme catalyses aldehydo-D-ribose 5-phosphate = D-ribulose 5-phosphate. It participates in carbohydrate degradation; pentose phosphate pathway; D-ribose 5-phosphate from D-ribulose 5-phosphate (non-oxidative stage): step 1/1. In terms of biological role, catalyzes the reversible conversion of ribose-5-phosphate to ribulose 5-phosphate. This is Ribose-5-phosphate isomerase A from Staphylococcus haemolyticus (strain JCSC1435).